Reading from the N-terminus, the 132-residue chain is Small ribosomal subunit protein uS8 (132 aa).

The protein belongs to the universal ribosomal protein uS8 family. Part of the 30S ribosomal subunit. Contacts proteins S5 and S12.

Its function is as follows. One of the primary rRNA binding proteins, it binds directly to 16S rRNA central domain where it helps coordinate assembly of the platform of the 30S subunit. This is Small ribosomal subunit protein uS8 from Paenarthrobacter aurescens (strain TC1).